The sequence spans 372 residues: Queuine tRNA-ribosyltransferase (372 aa).

Aspartate 92 (proton acceptor) is an active-site residue. Substrate contacts are provided by residues 92-96, aspartate 146, glutamine 188, and glycine 215; that span reads DSGGF. Positions 246 to 252 are RNA binding; sequence GIGTLRE. Aspartate 265 serves as the catalytic Nucleophile. An RNA binding; important for wobble base 34 recognition region spans residues 270 to 274; the sequence is TRLGR. Zn(2+)-binding residues include cysteine 303, cysteine 305, cysteine 308, and histidine 334.

The protein belongs to the queuine tRNA-ribosyltransferase family. In terms of assembly, homodimer. Within each dimer, one monomer is responsible for RNA recognition and catalysis, while the other monomer binds to the replacement base PreQ1. The cofactor is Zn(2+).

It carries out the reaction 7-aminomethyl-7-carbaguanine + guanosine(34) in tRNA = 7-aminomethyl-7-carbaguanosine(34) in tRNA + guanine. The protein operates within tRNA modification; tRNA-queuosine biosynthesis. Its function is as follows. Catalyzes the base-exchange of a guanine (G) residue with the queuine precursor 7-aminomethyl-7-deazaguanine (PreQ1) at position 34 (anticodon wobble position) in tRNAs with GU(N) anticodons (tRNA-Asp, -Asn, -His and -Tyr). Catalysis occurs through a double-displacement mechanism. The nucleophile active site attacks the C1' of nucleotide 34 to detach the guanine base from the RNA, forming a covalent enzyme-RNA intermediate. The proton acceptor active site deprotonates the incoming PreQ1, allowing a nucleophilic attack on the C1' of the ribose to form the product. After dissociation, two additional enzymatic reactions on the tRNA convert PreQ1 to queuine (Q), resulting in the hypermodified nucleoside queuosine (7-(((4,5-cis-dihydroxy-2-cyclopenten-1-yl)amino)methyl)-7-deazaguanosine). This Synechococcus sp. (strain CC9311) protein is Queuine tRNA-ribosyltransferase.